We begin with the raw amino-acid sequence, 412 residues long: Sterol-4-alpha-carboxylate 3-dehydrogenase erg26, decarboxylating (412 aa).

NADP(+) is bound by residues 17–23, 89–90, and 111–113; these read GGCGFLG, DI, and TAT. Residues serine 158 and tyrosine 188 each coordinate substrate. NADP(+) is bound by residues tyrosine 188, lysine 192, and 217–220; that span reads PAGI. Lysine 192 serves as the catalytic Proton donor.

This sequence belongs to the 3-beta-HSD family. As to quaternary structure, heterotetramer of erg25, erg26, erg27 and erg28. Erg28 acts as a scaffold to tether erg27 and other 4,4-demethylation-related enzymes, forming a demethylation enzyme complex, in the endoplasmic reticulum.

Its subcellular location is the endoplasmic reticulum membrane. The protein operates within steroid metabolism; ergosterol biosynthesis. Sterol-C4-methyl oxidase; part of the third module of ergosterol biosynthesis pathway that includes the late steps of the pathway. Erg26 is a catalytic component of the C-4 demethylation complex that catalyzes the conversion of 4,4-dimethylfecosterol into fecosterol via 4-methylfecosterol. The third module or late pathway involves the ergosterol synthesis itself through consecutive reactions that mainly occur in the endoplasmic reticulum (ER) membrane. Firstly, the squalene synthase erg9 catalyzes the condensation of 2 farnesyl pyrophosphate moieties to form squalene, which is the precursor of all steroids. Squalene synthase is crucial for balancing the incorporation of farnesyl diphosphate (FPP) into sterol and nonsterol isoprene synthesis. Secondly, squalene is converted into lanosterol by the consecutive action of the squalene epoxidase erg1 and the lanosterol synthase erg7. Then, the delta(24)-sterol C-methyltransferase erg6 methylates lanosterol at C-24 to produce eburicol. Eburicol is the substrate of the sterol 14-alpha demethylase encoded by cyp51A and cyp51B, to yield 4,4,24-trimethyl ergosta-8,14,24(28)-trienol. The C-14 reductase erg24 then reduces the C14=C15 double bond which leads to 4,4-dimethylfecosterol. A sequence of further demethylations at C-4, involving the C-4 demethylation complex containing the C-4 methylsterol oxidases erg25A or erg25B, the sterol-4-alpha-carboxylate 3-dehydrogenase erg26 and the 3-keto-steroid reductase erg27, leads to the production of fecosterol via 4-methylfecosterol. The C-8 sterol isomerase erg2 then catalyzes the reaction which results in unsaturation at C-7 in the B ring of sterols and thus converts fecosterol to episterol. The sterol-C5-desaturase erg3B then catalyzes the introduction of a C-5 double bond in the B ring to produce 5-dehydroepisterol. The 2 other sterol-C5-desaturases, erg3A and erg3C, seem to be less important in ergosterol biosynthesis. The C-22 sterol desaturase erg5 further converts 5-dehydroepisterol into ergosta-5,7,22,24(28)-tetraen-3beta-ol by forming the C-22(23) double bond in the sterol side chain. Finally, ergosta-5,7,22,24(28)-tetraen-3beta-ol is substrate of the C-24(28) sterol reductases erg4A and erg4B to produce ergosterol. Possible alternative sterol biosynthetic pathways might exist from fecosterol to ergosterol, depending on the activities of the erg3 isoforms. In Aspergillus fumigatus (strain ATCC MYA-4609 / CBS 101355 / FGSC A1100 / Af293) (Neosartorya fumigata), this protein is Sterol-4-alpha-carboxylate 3-dehydrogenase erg26, decarboxylating.